A 208-amino-acid polypeptide reads, in one-letter code: Large ribosomal subunit protein eL13 (208 aa).

It belongs to the eukaryotic ribosomal protein eL13 family.

The protein is Large ribosomal subunit protein eL13 (RPL13) of Chlamydomonas sp. (strain W80).